The following is a 106-amino-acid chain: Large ribosomal subunit protein uL23 (106 aa).

Belongs to the universal ribosomal protein uL23 family. Part of the 50S ribosomal subunit. Contacts protein L29, and trigger factor when it is bound to the ribosome.

Its function is as follows. One of the early assembly proteins it binds 23S rRNA. One of the proteins that surrounds the polypeptide exit tunnel on the outside of the ribosome. Forms the main docking site for trigger factor binding to the ribosome. The protein is Large ribosomal subunit protein uL23 of Neisseria meningitidis serogroup A / serotype 4A (strain DSM 15465 / Z2491).